Reading from the N-terminus, the 367-residue chain is DNA replication and repair protein RecF (367 aa).

Position 30-37 (30-37) interacts with ATP; sequence GNNAQGKT.

This sequence belongs to the RecF family.

Its subcellular location is the cytoplasm. Functionally, the RecF protein is involved in DNA metabolism; it is required for DNA replication and normal SOS inducibility. RecF binds preferentially to single-stranded, linear DNA. It also seems to bind ATP. The sequence is that of DNA replication and repair protein RecF from Clostridium tetani (strain Massachusetts / E88).